Reading from the N-terminus, the 93-residue chain is DNA-binding protein HU 1 (93 aa).

The protein belongs to the bacterial histone-like protein family. Homodimer.

Its subcellular location is the cytoplasm. The protein resides in the nucleoid. In terms of biological role, histone-like DNA-binding protein which is capable of wrapping DNA to stabilize it, and thus to prevent its denaturation under extreme environmental conditions. The sequence is that of DNA-binding protein HU 1 (hup1) from Streptomyces coelicolor (strain ATCC BAA-471 / A3(2) / M145).